Here is a 237-residue protein sequence, read N- to C-terminus: 2-C-methyl-D-erythritol 4-phosphate cytidylyltransferase (237 aa).

It belongs to the IspD/TarI cytidylyltransferase family. IspD subfamily.

The catalysed reaction is 2-C-methyl-D-erythritol 4-phosphate + CTP + H(+) = 4-CDP-2-C-methyl-D-erythritol + diphosphate. It functions in the pathway isoprenoid biosynthesis; isopentenyl diphosphate biosynthesis via DXP pathway; isopentenyl diphosphate from 1-deoxy-D-xylulose 5-phosphate: step 2/6. Functionally, catalyzes the formation of 4-diphosphocytidyl-2-C-methyl-D-erythritol from CTP and 2-C-methyl-D-erythritol 4-phosphate (MEP). The chain is 2-C-methyl-D-erythritol 4-phosphate cytidylyltransferase from Acaryochloris marina (strain MBIC 11017).